The following is a 438-amino-acid chain: Transposon Ty2-GR1 Gag polyprotein (438 aa).

3 stretches are compositionally biased toward polar residues: residues 1 to 11 (MESQQLHQNPH), 19 to 39 (ASVT…SASN), and 49 to 60 (KVNSQQETTPGT). Disordered regions lie at residues 1 to 86 (MESQ…GQYQ), 360 to 403 (HSEY…ATSS), and 418 to 438 (VSSQ…TERI). Residues 295–397 (ENNINVSDRL…SSKPRAAKAH (103 aa)) form an RNA-binding region. The span at 369–381 (TSPNTTNTKVTTR) shows a compositional bias: low complexity.

Homotrimer.

The protein resides in the cytoplasm. In terms of biological role, capsid protein (CA) is the structural component of the virus-like particle (VLP), forming the shell that encapsulates the retrotransposons dimeric RNA genome. The particles are assembled from trimer-clustered units and there are holes in the capsid shells that allow for the diffusion of macromolecules. CA also has nucleocapsid-like chaperone activity, promoting primer tRNA(i)-Met annealing to the multipartite primer-binding site (PBS), dimerization of Ty2 RNA and initiation of reverse transcription. This chain is Transposon Ty2-GR1 Gag polyprotein (TY2A-GR1), found in Saccharomyces cerevisiae (strain ATCC 204508 / S288c) (Baker's yeast).